The sequence spans 1336 residues: pre-mRNA 3' end processing protein WDR33 (1336 aa).

Position 2 is an N-acetylalanine (Ala-2). At Ser-7 the chain carries Phosphoserine. N6-acetyllysine is present on Lys-46. WD repeat units follow at residues 117-156, 159-198, 200-239, 242-283, 286-325, 329-369, and 373-412; these read KVKCPVFVVRWTPEGRRLVTGASSGEFTLWNGLTFNFETI, AHDSPVRAMTWSHNDMWMLTADHGGYVKYWQSNMNNVKMF, AHKEAIREASFSPTDNKFATCSDDGTVRIWDFLRCHEERI, GHGA…SLAT, AHKNTVMEVKLNLNGNWLLTASRDHLCKLFDIRNLKEELQ, GHKK…EVGG, and AHEGMIWSLAWHPLGHILCSGSNDHTSKFWTRNRPGDKMR. Residues Lys-526, Lys-530, and Lys-560 each participate in a glycyl lysine isopeptide (Lys-Gly) (interchain with G-Cter in SUMO2) cross-link. The disordered stretch occupies residues 568–1336; it reads QVEQIQPPPS…GASRGGGRGR (769 aa). Over residues 573-590 the composition is skewed to pro residues; sequence QPPPSSGTPLLGPQPFPG. A compositionally biased stretch (polar residues) spans 594 to 607; that stretch reads MSQIPQGFQQPHPS. Low complexity predominate over residues 608 to 643; it reads QQMPMNMAQMGPPGPQGQFRPPGPQGQMGPQGPPLH. The Collagen-like domain occupies 618-770; sequence GPPGPQGQFR…GPGSQGIQGP (153 aa). The segment covering 683–695 has biased composition (pro residues); it reads PHGPLGPQGPPGP. 2 stretches are compositionally biased toward low complexity: residues 696 to 707 and 726 to 751; these read QGSSGPQGHMGP and QGHLGPQGPPGTQGMQGPPGPRGMQG. An Omega-N-methylarginine modification is found at Arg-782. Positions 854-869 are enriched in low complexity; that stretch reads GPPGSQSQQGPPQGSL. Residue Arg-915 is modified to Asymmetric dimethylarginine. Low complexity predominate over residues 932-941; sequence PGLGQQGAQG. Basic and acidic residues-rich tracts occupy residues 971–989 and 998–1034; these read SERRHEQSGGPEHGPERGP and GPPDRRGPHPDFPDDFSRPDDFHPDKRFGHRLREFEG. Arg-987 bears the Omega-N-methylarginine mark. Arg-1035 is modified (omega-N-methylarginine). Basic and acidic residues-rich tracts occupy residues 1056–1068 and 1078–1122; these read PDHREFSEGDGRG and EGRR…RGRD. The segment covering 1130-1140 has biased composition (acidic residues); the sequence is FGPEENFDASE. The span at 1141-1150 shows a compositional bias: basic and acidic residues; sequence EAARGRDLRG. A compositionally biased stretch (basic residues) spans 1151–1160; the sequence is RGRGTPRGGR. Basic and acidic residues-rich tracts occupy residues 1169-1217 and 1242-1259; these read EFPR…RERS and SEHREMEAPGGPSEDRGG. A Phosphoserine modification is found at Ser-1210. Arg-1262 carries the omega-N-methylarginine modification. The span at 1281-1293 shows a compositional bias: basic and acidic residues; it reads DGEHHDGYHRDEP. The segment covering 1301 to 1326 has biased composition (low complexity); that stretch reads GTPSRGGRSGSNWGRGSNMNSGPPRR. The residue at position 1315 (Arg-1315) is an Asymmetric dimethylarginine; alternate. Arg-1315 carries the omega-N-methylarginine; alternate modification.

Belongs to the WD repeat WDR33 family. Component of the cleavage and polyadenylation specificity factor (CPSF) module of the pre-mRNA 3'-end processing complex. Interacts with CPSF3/CPSF73. In terms of tissue distribution, most highly expressed in testis.

The protein resides in the nucleus. Functionally, essential for both cleavage and polyadenylation of pre-mRNA 3' ends. The sequence is that of pre-mRNA 3' end processing protein WDR33 (WDR33) from Homo sapiens (Human).